The chain runs to 518 residues: Lysine 5,6-aminomutase alpha subunit (518 aa).

Residues 184 to 189, S238, Y263, R268, and N299 contribute to the pyridoxal 5'-phosphate site; that span reads RTTGQS.

Belongs to the KamD family. Heterotetramer of 2 alpha and 2 beta subunits. Adenosylcob(III)alamin is required as a cofactor. The cofactor is pyridoxal 5'-phosphate.

The catalysed reaction is (3S)-3,6-diaminohexanoate = (3S,5S)-3,5-diaminohexanoate. It carries out the reaction D-lysine = (2R,5S)-2,5-diaminohexanoate. The protein operates within amino-acid degradation; L-lysine degradation via acetate pathway. In terms of biological role, catalyzes the migration of the L-beta-lysine and D-lysine epsilon amino group to the delta carbon to produce 3,5-diaminohexanoate and 2,5-diaminohexanoate, respectively. This chain is Lysine 5,6-aminomutase alpha subunit, found in Fusobacterium nucleatum subsp. nucleatum (strain ATCC 25586 / DSM 15643 / BCRC 10681 / CIP 101130 / JCM 8532 / KCTC 2640 / LMG 13131 / VPI 4355).